The following is a 197-amino-acid chain: Ion-translocating oxidoreductase complex subunit B (197 aa).

A hydrophobic region spans residues 1–26 (MSIVIIAVLALSALALTFGAVLGFAS). Residues 32 to 90 (EGNPIVDQIDGLLPQTQCGQCGYPGCRPYAEAIANGDAINKCPPGGEATITALADLLDV) enclose the 4Fe-4S domain. [4Fe-4S] cluster contacts are provided by C49, C52, C57, C73, C115, C118, C121, C125, C145, C148, C151, and C155. 2 consecutive 4Fe-4S ferredoxin-type domains span residues 106–135 (QVAY…GAAK) and 136–165 (QMHT…MIPA).

The protein belongs to the 4Fe4S bacterial-type ferredoxin family. RnfB subfamily. The complex is composed of six subunits: RnfA, RnfB, RnfC, RnfD, RnfE and RnfG. It depends on [4Fe-4S] cluster as a cofactor.

Its subcellular location is the cell inner membrane. Functionally, part of a membrane-bound complex that couples electron transfer with translocation of ions across the membrane. In Hahella chejuensis (strain KCTC 2396), this protein is Ion-translocating oxidoreductase complex subunit B.